Here is a 229-residue protein sequence, read N- to C-terminus: Cytosolic-abundant heat soluble protein 107838 (229 aa).

Residues 1 to 29 (MSAEAMNMNMNQDAVFIPPPEGEQYERKE) are disordered. Positions 109–145 (LSANYQKEVERKTEAYRKQQEVEADKIRKELEKQHLR) form a coiled coil. 2 CAHS motif regions span residues 124–142 (YRKQ…LEKQ) and 161–179 (QKKM…MDRE). Residues 202–218 (SSAAGTETGGQVVSESQ) show a composition bias toward polar residues. Residues 202–229 (SSAAGTETGGQVVSESQKFTERNRQIKQ) are disordered. Over residues 219–229 (KFTERNRQIKQ) the composition is skewed to basic and acidic residues.

This sequence belongs to the Cytosolic-abundant heat soluble protein (CAHS) family.

The protein resides in the cytoplasm. CAHS proteins are cytosolic heat soluble proteins that seem to contribute to the anhydrobiosis in tardigrades, but their specific mechanisms are yet to be identified. It is possible that protection during anhydrobiosis might occur via the stabilization of vitrifying small molecules such as sugars, but not via the direct glass transition of CAHS proteins themselves. The chain is Cytosolic-abundant heat soluble protein 107838 from Paramacrobiotus richtersi (Water bear).